We begin with the raw amino-acid sequence, 694 residues long: Methionine--tRNA ligase (694 aa).

The short motif at 12–22 is the 'HIGH' region element; that stretch reads PYANGPLHLGH. Zn(2+) contacts are provided by Cys143, Cys146, Cys156, and Cys159. The short motif at 330 to 334 is the 'KMSKS' region element; sequence KMSKS. Lys333 is a binding site for ATP. The span at 550–573 shows a compositional bias: low complexity; that stretch reads MAAPAAPATTTKPAPSKADAKPAA. Residues 550–582 form a disordered region; sequence MAAPAAPATTTKPAPSKADAKPAAVANPESQTT. The tRNA-binding domain occupies 591–694; the sequence is DFAKLDLRIG…SGAQPGMPVR (104 aa).

It belongs to the class-I aminoacyl-tRNA synthetase family. MetG type 1 subfamily. In terms of assembly, homodimer. It depends on Zn(2+) as a cofactor.

It is found in the cytoplasm. The enzyme catalyses tRNA(Met) + L-methionine + ATP = L-methionyl-tRNA(Met) + AMP + diphosphate. In terms of biological role, is required not only for elongation of protein synthesis but also for the initiation of all mRNA translation through initiator tRNA(fMet) aminoacylation. The sequence is that of Methionine--tRNA ligase from Xanthomonas euvesicatoria pv. vesicatoria (strain 85-10) (Xanthomonas campestris pv. vesicatoria).